The primary structure comprises 127 residues: Small ribosomal subunit protein uS11 (127 aa).

This sequence belongs to the universal ribosomal protein uS11 family. As to quaternary structure, part of the 30S ribosomal subunit. Interacts with proteins S7 and S18. Binds to IF-3.

Located on the platform of the 30S subunit, it bridges several disparate RNA helices of the 16S rRNA. Forms part of the Shine-Dalgarno cleft in the 70S ribosome. The chain is Small ribosomal subunit protein uS11 from Chlorobaculum parvum (strain DSM 263 / NCIMB 8327) (Chlorobium vibrioforme subsp. thiosulfatophilum).